The primary structure comprises 357 residues: UDP-N-acetylglucosamine--N-acetylmuramyl-(pentapeptide) pyrophosphoryl-undecaprenol N-acetylglucosamine transferase (357 aa).

UDP-N-acetyl-alpha-D-glucosamine contacts are provided by residues 11-13 (TGG), asparagine 120, arginine 161, serine 188, and glutamine 281.

The protein belongs to the glycosyltransferase 28 family. MurG subfamily.

It localises to the cell inner membrane. It catalyses the reaction di-trans,octa-cis-undecaprenyl diphospho-N-acetyl-alpha-D-muramoyl-L-alanyl-D-glutamyl-meso-2,6-diaminopimeloyl-D-alanyl-D-alanine + UDP-N-acetyl-alpha-D-glucosamine = di-trans,octa-cis-undecaprenyl diphospho-[N-acetyl-alpha-D-glucosaminyl-(1-&gt;4)]-N-acetyl-alpha-D-muramoyl-L-alanyl-D-glutamyl-meso-2,6-diaminopimeloyl-D-alanyl-D-alanine + UDP + H(+). It functions in the pathway cell wall biogenesis; peptidoglycan biosynthesis. Its function is as follows. Cell wall formation. Catalyzes the transfer of a GlcNAc subunit on undecaprenyl-pyrophosphoryl-MurNAc-pentapeptide (lipid intermediate I) to form undecaprenyl-pyrophosphoryl-MurNAc-(pentapeptide)GlcNAc (lipid intermediate II). This is UDP-N-acetylglucosamine--N-acetylmuramyl-(pentapeptide) pyrophosphoryl-undecaprenol N-acetylglucosamine transferase from Prochlorococcus marinus (strain SARG / CCMP1375 / SS120).